A 209-amino-acid chain; its full sequence is uncharacterized protein (209 aa).

Residues leucine 13–aspartate 75 are a coiled coil. The interval alanine 107 to threonine 135 is disordered. Over residues leucine 110–glutamine 119 the composition is skewed to polar residues. Over residues serine 120–serine 133 the composition is skewed to low complexity.

Belongs to the asfivirus K205R family.

Its subcellular location is the host cytoplasm. Induces host endoplasmic reticulum stress and consequently activates autophagy and NF-kappa-B signaling pathway. In turn, may induce autophagy-mediated STING1 degradation and innate immune evasion. This is an uncharacterized protein from Ornithodoros (relapsing fever ticks).